A 1034-amino-acid polypeptide reads, in one-letter code: Putative beta-glucuronidase (1034 aa).

Catalysis depends on glutamate 432, which acts as the Proton donor. Residues 909–1034 (VDISAEEGVL…GPFIDELFID (126 aa)) form the CBM6 domain.

It belongs to the glycosyl hydrolase 2 family.

It is found in the cytoplasm. The enzyme catalyses a beta-D-glucuronoside + H2O = D-glucuronate + an alcohol. Glycoside hydrolase that may be involved in ulvan degradation. Ulvan is the main polysaccharide component of the Ulvales (green seaweed) cell wall. It is composed of disaccharide building blocks comprising 3-sulfated rhamnose (Rha3S) linked to D-glucuronic acid (GlcA), L-iduronic acid (IduA), or D-xylose (Xyl). The protein is Putative beta-glucuronidase of Formosa agariphila (strain DSM 15362 / KCTC 12365 / LMG 23005 / KMM 3901 / M-2Alg 35-1).